A 337-amino-acid chain; its full sequence is Ral GTPase-activating protein subunit alpha-1 (337 aa).

In terms of assembly, component of the heterodimeric RalGAP1 complex with RALGAPB. Heterodimerization is required for activity. Interacts with the HLH region of TCF3/isoform E12.

It localises to the cytoplasm. Its subcellular location is the nucleus. Catalytic subunit of the heterodimeric RalGAP1 complex which acts as a GTPase activator for the Ras-like small GTPases RALA and RALB. The protein is Ral GTPase-activating protein subunit alpha-1 of Sus scrofa (Pig).